We begin with the raw amino-acid sequence, 147 residues long: UPF0306 protein YhbP (147 aa).

This sequence belongs to the UPF0306 family.

The sequence is that of UPF0306 protein YhbP from Shigella dysenteriae serotype 1 (strain Sd197).